We begin with the raw amino-acid sequence, 275 residues long: Bis(5'-nucleosyl)-tetraphosphatase, symmetrical (275 aa).

This sequence belongs to the Ap4A hydrolase family.

It catalyses the reaction P(1),P(4)-bis(5'-adenosyl) tetraphosphate + H2O = 2 ADP + 2 H(+). Hydrolyzes diadenosine 5',5'''-P1,P4-tetraphosphate to yield ADP. The polypeptide is Bis(5'-nucleosyl)-tetraphosphatase, symmetrical (apaH) (Pasteurella multocida (strain Pm70)).